A 462-amino-acid polypeptide reads, in one-letter code: UDP-N-acetylmuramate--L-alanine ligase (462 aa).

112 to 118 (GTHGKTT) lines the ATP pocket.

It belongs to the MurCDEF family.

Its subcellular location is the cytoplasm. The enzyme catalyses UDP-N-acetyl-alpha-D-muramate + L-alanine + ATP = UDP-N-acetyl-alpha-D-muramoyl-L-alanine + ADP + phosphate + H(+). It functions in the pathway cell wall biogenesis; peptidoglycan biosynthesis. Cell wall formation. The protein is UDP-N-acetylmuramate--L-alanine ligase of Geobacter sulfurreducens (strain ATCC 51573 / DSM 12127 / PCA).